A 350-amino-acid chain; its full sequence is uncharacterized protein (350 aa).

The tract at residues 330–350 is disordered; that stretch reads RHPGDLRSEPHYRPSAKLAEF. Residues 331 to 341 show a composition bias toward basic and acidic residues; the sequence is HPGDLRSEPHY.

This is an uncharacterized protein from Mycobacterium tuberculosis.